The following is a 213-amino-acid chain: U1 small nuclear ribonucleoprotein C (213 aa).

Residues 4–36 form a Matrin-type zinc finger; it reads YYCDYCDTYLTHDSPSVRKQHNAGYKHKANVRS. A compositionally biased stretch (pro residues) spans 143 to 166; sequence APSMPMPPLNSLPRPPTMNVPPAV. The tract at residues 143-213 is disordered; sequence APSMPMPPLN…INAQGPEANH (71 aa). Over residues 167–180 the composition is skewed to low complexity; the sequence is PGSTSTPTSGGAPS.

Belongs to the U1 small nuclear ribonucleoprotein C family. As to quaternary structure, U1 snRNP is composed of the 7 core Sm proteins B/B', D1, D2, D3, E, F and G that assemble in a heptameric protein ring on the Sm site of the small nuclear RNA to form the core snRNP, and at least 3 U1 snRNP-specific proteins U1-70K, U1-A and U1-C. U1-C interacts with U1 snRNA and the 5' splice-site region of the pre-mRNA.

The protein localises to the nucleus. Its function is as follows. Component of the spliceosomal U1 snRNP, which is essential for recognition of the pre-mRNA 5' splice-site and the subsequent assembly of the spliceosome. U1-C is directly involved in initial 5' splice-site recognition for both constitutive and regulated alternative splicing. The interaction with the 5' splice-site seems to precede base-pairing between the pre-mRNA and the U1 snRNA. Stimulates commitment or early (E) complex formation by stabilizing the base pairing of the 5' end of the U1 snRNA and the 5' splice-site region. The protein is U1 small nuclear ribonucleoprotein C of Vitis vinifera (Grape).